The primary structure comprises 449 residues: UDP-N-acetylmuramoylalanine--D-glutamate ligase (449 aa).

113–119 provides a ligand contact to ATP; sequence GTNGKTT.

Belongs to the MurCDEF family.

The protein resides in the cytoplasm. It catalyses the reaction UDP-N-acetyl-alpha-D-muramoyl-L-alanine + D-glutamate + ATP = UDP-N-acetyl-alpha-D-muramoyl-L-alanyl-D-glutamate + ADP + phosphate + H(+). Its pathway is cell wall biogenesis; peptidoglycan biosynthesis. Its function is as follows. Cell wall formation. Catalyzes the addition of glutamate to the nucleotide precursor UDP-N-acetylmuramoyl-L-alanine (UMA). The chain is UDP-N-acetylmuramoylalanine--D-glutamate ligase from Gloeothece citriformis (strain PCC 7424) (Cyanothece sp. (strain PCC 7424)).